Here is a 546-residue protein sequence, read N- to C-terminus: MWRRTYLLLLLIRAYFALSPSYIHPDEHFQGLEVFAGRILSYPSRLPWEFTSERPIRSVFPLYPIYGVPISLLKWFYTETGTESPPAELVYYVVRGVMFLLSFVLEDWAVHDLVPLPRHRRVALVLVASSYVTWTHQTHTFSNSLETLLVAWGLVLINRIIDNKRRSSLFSCAILSFICVAGIFNRITFPAFLVLSLGLVVYNFPRRPLSFFSLVGFGLVFFCIAVFADTTFYKPSASFADVLRSPVITPLNNLLYNTDNSNLALHGLHPHYNHFLVNLPQLLGPALVAMVLQAYNRGFIASWFKNLRAASALSATAMLSIFPHQEPRFLIPCVPLLLSCLQVRKSRIFLGAWVIFNATLGFLMGVYHQGGVVSTQLAVPSVISTTTSLWHESLKGTQSLFATVVWWKTYSPPLWLLGDNSTLNLNIDTRDLMGKPGSEMVKELERLVPTCGSKQKSTELTSSLEQPDAVFVVAPKSVTFLDQFLAPQSPDSSLELLELWSYKKHISLDDLDFGSDGVLPTMKRVIGRRGLGVWLAQRPGCRAIDS.

The next 7 helical transmembrane spans lie at 5-25 (TYLL…YIHP), 58-78 (SVFP…WFYT), 96-116 (GVMF…LVPL), 141-161 (FSNS…NRII), 174-194 (ILSF…AFLV), 208-228 (PLSF…AVFA), and 348-368 (IFLG…GVYH). Residue asparagine 420 is glycosylated (N-linked (GlcNAc...) asparagine).

Belongs to the glycosyltransferase 22 family. PIGZ subfamily.

It localises to the endoplasmic reticulum membrane. Its pathway is glycolipid biosynthesis; glycosylphosphatidylinositol-anchor biosynthesis. In terms of biological role, alpha-1,2-mannosyltransferase involved in glycosylphosphatidylinositol-anchor biosynthesis. Transfers a fourth mannose to trimannosyl-GPIs during GPI precursor assembly. The presence of a fourth mannose in GPI is essential in fungi. The polypeptide is GPI mannosyltransferase 4 (smp3) (Emericella nidulans (strain FGSC A4 / ATCC 38163 / CBS 112.46 / NRRL 194 / M139) (Aspergillus nidulans)).